The sequence spans 375 residues: Prophage integrase IntE (375 aa).

Residues 82 to 167 (ITTSTWLDRY…VLIDVFKEAQ (86 aa)) form the Core-binding (CB) domain. In terms of domain architecture, Tyr recombinase spans 189 to 375 (ITRQRLSLEE…RGKGWSKVAL (187 aa)). Residues Arg226, Lys249, His330, Arg333, and His353 contribute to the active site. The disordered stretch occupies residues 350–375 (LLGHKTQQQTDRYHDDRGKGWSKVAL). Residue Tyr362 is the O-(3'-phospho-DNA)-tyrosine intermediate of the active site.

This sequence belongs to the 'phage' integrase family.

Functionally, integrase from the cryptic lambdoid prophage e14. Integrase is necessary for integration of the phage into the host genome by site-specific recombination. In conjunction with excisionase, integrase is also necessary for excision of the prophage from the host genome. The polypeptide is Prophage integrase IntE (intE) (Escherichia coli (strain K12)).